The primary structure comprises 349 residues: S-adenosylmethionine:tRNA ribosyltransferase-isomerase (349 aa).

It belongs to the QueA family. In terms of assembly, monomer.

It is found in the cytoplasm. The enzyme catalyses 7-aminomethyl-7-carbaguanosine(34) in tRNA + S-adenosyl-L-methionine = epoxyqueuosine(34) in tRNA + adenine + L-methionine + 2 H(+). The protein operates within tRNA modification; tRNA-queuosine biosynthesis. Functionally, transfers and isomerizes the ribose moiety from AdoMet to the 7-aminomethyl group of 7-deazaguanine (preQ1-tRNA) to give epoxyqueuosine (oQ-tRNA). In Pseudomonas fluorescens (strain SBW25), this protein is S-adenosylmethionine:tRNA ribosyltransferase-isomerase.